The chain runs to 198 residues: Guanylate kinase (198 aa).

In terms of domain architecture, Guanylate kinase-like spans 4–186; the sequence is PRPVVLSGPS…AYATLKQALS (183 aa). 14-19 is a binding site for ATP; the sequence is GAGKST. 37–51 provides a ligand contact to substrate; that stretch reads SHTTRNPRPGEEDGK. Residues arginine 44, arginine 137, and arginine 148 contribute to the active site. 171-172 is an ATP binding site; sequence ND.

Belongs to the guanylate kinase family. As to quaternary structure, monomer. Interacts with RD3. Widely expressed. In retina is expressed in inner segment, outer nuclear layer, outer plexiform layer, inner plexiform layer, and ganglion cell layer (at protein level).

It localises to the photoreceptor inner segment. It is found in the cytoplasm. Its subcellular location is the cytosol. The protein resides in the mitochondrion. It catalyses the reaction GMP + ATP = GDP + ADP. Functionally, catalyzes the phosphorylation of GMP to GDP. Essential enzyme for recycling GMP and indirectly, cyclic GMP (cGMP). Involved in the cGMP metabolism in photoreceptors. The chain is Guanylate kinase from Mus musculus (Mouse).